A 255-amino-acid polypeptide reads, in one-letter code: 1-(5-phosphoribosyl)-5-[(5-phosphoribosylamino)methylideneamino] imidazole-4-carboxamide isomerase (255 aa).

D8 serves as the catalytic Proton acceptor. D129 (proton donor) is an active-site residue.

The protein belongs to the HisA/HisF family.

It localises to the cytoplasm. The enzyme catalyses 1-(5-phospho-beta-D-ribosyl)-5-[(5-phospho-beta-D-ribosylamino)methylideneamino]imidazole-4-carboxamide = 5-[(5-phospho-1-deoxy-D-ribulos-1-ylimino)methylamino]-1-(5-phospho-beta-D-ribosyl)imidazole-4-carboxamide. Its pathway is amino-acid biosynthesis; L-histidine biosynthesis; L-histidine from 5-phospho-alpha-D-ribose 1-diphosphate: step 4/9. In Prochlorococcus marinus (strain MIT 9303), this protein is 1-(5-phosphoribosyl)-5-[(5-phosphoribosylamino)methylideneamino] imidazole-4-carboxamide isomerase.